The primary structure comprises 123 residues: UPF0102 protein PSEEN4497 (123 aa).

It belongs to the UPF0102 family.

In Pseudomonas entomophila (strain L48), this protein is UPF0102 protein PSEEN4497.